Here is a 205-residue protein sequence, read N- to C-terminus: Inactive ribonuclease-like protein 9 (205 aa).

A signal peptide spans methionine 1–phenylalanine 24. Disulfide bonds link cysteine 97/cysteine 152, cysteine 115/cysteine 167, and cysteine 122/cysteine 129. Residues asparagine 130 and asparagine 142 are each glycosylated (N-linked (GlcNAc...) asparagine).

The protein belongs to the pancreatic ribonuclease family.

The protein resides in the secreted. Its function is as follows. Does not exhibit any ribonuclease activity. The protein is Inactive ribonuclease-like protein 9 (RNASE9) of Cebus capucinus (White-faced sapajou).